The sequence spans 192 residues: Elongation factor P (192 aa).

The protein belongs to the elongation factor P family.

The protein localises to the cytoplasm. It functions in the pathway protein biosynthesis; polypeptide chain elongation. In terms of biological role, involved in peptide bond synthesis. Stimulates efficient translation and peptide-bond synthesis on native or reconstituted 70S ribosomes in vitro. Probably functions indirectly by altering the affinity of the ribosome for aminoacyl-tRNA, thus increasing their reactivity as acceptors for peptidyl transferase. The polypeptide is Elongation factor P (Borrelia turicatae (strain 91E135)).